Reading from the N-terminus, the 338-residue chain is CRISPR system Cmr subunit Cmr1-1 (338 aa).

The protein belongs to the CRISPR system Cmr1 family. In terms of assembly, part of the type III-B Cmr ribonucleoprotein (RNP) complex, an elongated RNP with Cmr2 and Cmr3 as the base, with Cmr4 and Cmr5 forming a helical core along the mature crRNA (39 or 45 nt in length), while the complex is capped by Cmr6 and Cmr1. The 5' end of the crRNA is bound to Cmr2 and Cmr3, while Cmr6 and a Cmr1 subunit (Cmr1-1 or Cmr1-2) cap the 3' end of the crRNA. The target RNA lies antiparallel to the crRNA, with its 5' end near Cmr1 and Cmr6 and its 3' end near Cmr2 and Cmr3; major target cleavage occurs nears the junction of Cmr1/Cmr6 and Cmr4/Cmr, with minor cleavage occurring at 6 nt intervals which coincide with the proposed spacing of Cmr4 subunits.

The protein resides in the cytoplasm. Functionally, CRISPR (clustered regularly interspaced short palindromic repeat), is an adaptive immune system that provides protection against mobile genetic elements (viruses, transposable elements and conjugative plasmids). CRISPR clusters contain sequences complementary to antecedent mobile elements and target invading nucleic acids. CRISPR clusters are transcribed and processed into CRISPR RNA (crRNA), formerly called psiRNA (prokaryotic silencing) in this organism. Part of the Cmr ribonucleoprotein complex which has divalent cation-dependent endoribonuclease activity specific for ssRNA complementary to the crRNA (target RNA), generating 5' hydroxy- and 3' phosphate or 2'-3' cyclic phosphate termini. Cmr4 is probably the subunit that cleaves target RNA. Cmr complex does not cleave ssDNA complementary to the crRNA. Cleavage of invading RNA is guided by the crRNA; substrate cleavage occurs a fixed distance (14 nt) from the 3' end of the crRNA. In vitro reconstitution shows Cmr1-2 and Cmr5 are not absolutely necessary for target cleavage. In Pyrococcus furiosus (strain ATCC 43587 / DSM 3638 / JCM 8422 / Vc1), this protein is CRISPR system Cmr subunit Cmr1-1.